Reading from the N-terminus, the 312-residue chain is Metaxin-1 homolog (312 aa).

A helical membrane pass occupies residues 282–302 (ILFTIGALVLSVAFAIHTGLI).

Belongs to the metaxin family. Associates with the mitochondrial contact site and cristae organizing system (MICOS) complex (also known as MINOS or MitOS complex).

The protein localises to the mitochondrion outer membrane. Its function is as follows. Involved in transport of proteins into the mitochondrion. Essential for embryonic development. This chain is Metaxin-1 homolog, found in Caenorhabditis briggsae.